The primary structure comprises 65 residues: VCERHVGRKSTNNLNLTCQWNSCRTTTVKRDHITSHIRVHVPLKPHKCEFCGKSFKRPQDLKKHV.

The segment at 16-40 (LTCQWNSCRTTTVKRDHITSHIRVH) adopts a C2H2-type 1 zinc-finger fold. Residues 46–65 (HKCEFCGKSFKRPQDLKKHV) form a C2H2-type 2; degenerate zinc finger.

Belongs to the pacC/RIM101 family.

It is found in the nucleus. Functionally, transcription factor that mediates regulation of both acid- and alkaline-expressed genes in response to ambient pH. At alkaline ambient pH, activates transcription of alkaline-expressed genes (including pac1 itself) and represses transcription of acid-expressed genes. The sequence is that of pH-response transcription factor pacC/RIM101 (pac1) from Colletotrichum gloeosporioides (Anthracnose fungus).